The following is an 876-amino-acid chain: Xylosyltransferase oxt (876 aa).

Topologically, residues 1 to 14 are cytoplasmic; it reads MEQSVSARWLKRYR. A helical; Signal-anchor for type II membrane protein membrane pass occupies residues 15 to 35; that stretch reads AFFLILLLIVAIQLFLAYKSL. At 36–876 the chain is on the lumenal side; that stretch reads DIVGGGSGSG…PKSDVDALLK (841 aa). The interval 48-67 is disordered; sequence AAEAPASPPPPHAQARVQPP. Intrachain disulfides connect Cys-83-Cys-111, Cys-127-Cys-465, Cys-484-Cys-497, and Cys-486-Cys-495. N-linked (GlcNAc...) asparagine glycosylation is found at Asn-131 and Asn-135. The region spanning 134 to 228 is the WSC domain; sequence ANVSLGCFKD…FYAMNIYETG (95 aa). Residues Asp-283 and 312 to 314 each bind UDP-alpha-D-xylose; that span reads TIW. An N-linked (GlcNAc...) asparagine glycan is attached at Asn-342. 415–416 provides a ligand contact to UDP-alpha-D-xylose; that stretch reads DW. UDP-alpha-D-xylose contacts are provided by residues Ser-498 and 522–523; that span reads RK. 2 N-linked (GlcNAc...) asparagine glycosylation sites follow: Asn-696 and Asn-725. Cys-842 and Cys-855 are disulfide-bonded.

It belongs to the glycosyltransferase 14 family. XylT subfamily. Ca(2+) is required as a cofactor. It depends on Mn(2+) as a cofactor. Requires Mg(2+) as cofactor.

The protein localises to the endoplasmic reticulum membrane. It is found in the golgi apparatus membrane. The enzyme catalyses UDP-alpha-D-xylose + L-seryl-[protein] = 3-O-(beta-D-xylosyl)-L-seryl-[protein] + UDP + H(+). It functions in the pathway glycan metabolism; chondroitin sulfate biosynthesis. The protein operates within glycan metabolism; heparan sulfate biosynthesis. Its function is as follows. Catalyzes the first step in biosynthesis of glycosaminoglycan. Transfers D-xylose from UDP-D-xylose to specific serine residues of the core protein. This is Xylosyltransferase oxt from Drosophila melanogaster (Fruit fly).